The chain runs to 114 residues: Protein vCCL3 (114 aa).

Positions 1-26 are cleaved as a signal peptide; that stretch reads MWSMCWVLRAHLGLLFWVAVIELCAA.

Acts as a highly selective agonist for human lymphoactin receptor XCR1. The protein is Protein vCCL3 (K4.1) of Human herpesvirus 8 type P (isolate GK18) (HHV-8).